The sequence spans 392 residues: F-box protein At5g65850 (392 aa).

Residues 29–78 (TEKSVQIPVDIIIEILLRLPAKSIATCRCVSKLWISVICRQDFTELFLTR) enclose the F-box domain.

This is F-box protein At5g65850 from Arabidopsis thaliana (Mouse-ear cress).